Here is a 374-residue protein sequence, read N- to C-terminus: Probable plastid-lipid-associated protein 3, chloroplastic (374 aa).

The N-terminal 46 residues, 1 to 46 (MAMPPPLFAAASHASLLLPSPTIHSSTGSRRPFRLPLRSSRRPPVA), are a transit peptide targeting the chloroplast. The segment at 19–148 (PSPTIHSSTG…EDNEEERREE (130 aa)) is disordered. Residues 28 to 54 (GSRRPFRLPLRSSRRPPVAAAAASGVP) are compositionally biased toward low complexity. Pro residues-rich tracts occupy residues 64–73 (APEPPSQPDP) and 127–136 (PAPPPPPPPV).

Belongs to the PAP/fibrillin family.

Its subcellular location is the plastid. It is found in the chloroplast. This chain is Probable plastid-lipid-associated protein 3, chloroplastic (PAP3), found in Oryza sativa subsp. japonica (Rice).